The chain runs to 534 residues: ATP synthase subunit alpha (534 aa).

170 to 177 contributes to the ATP binding site; the sequence is GDRQTGKT. Residues 505–534 are disordered; that stretch reads HEDARVKSETAQAAGKDKDEKAAATAGAGK.

It belongs to the ATPase alpha/beta chains family. In terms of assembly, F-type ATPases have 2 components, CF(1) - the catalytic core - and CF(0) - the membrane proton channel. CF(1) has five subunits: alpha(3), beta(3), gamma(1), delta(1), epsilon(1). CF(0) has three main subunits: a(1), b(2) and c(9-12). The alpha and beta chains form an alternating ring which encloses part of the gamma chain. CF(1) is attached to CF(0) by a central stalk formed by the gamma and epsilon chains, while a peripheral stalk is formed by the delta and b chains.

Its subcellular location is the cell inner membrane. It carries out the reaction ATP + H2O + 4 H(+)(in) = ADP + phosphate + 5 H(+)(out). Produces ATP from ADP in the presence of a proton gradient across the membrane. The alpha chain is a regulatory subunit. In Acidobacterium capsulatum (strain ATCC 51196 / DSM 11244 / BCRC 80197 / JCM 7670 / NBRC 15755 / NCIMB 13165 / 161), this protein is ATP synthase subunit alpha.